A 664-amino-acid polypeptide reads, in one-letter code: Protein IQ-DOMAIN 28 (664 aa).

Residues 1 to 85 (MGKTPGKWIK…DESKDNLESR (85 aa)) form a disordered region. Low complexity predominate over residues 51 to 64 (VDPPVVSSQPVPAS). Over residues 76–85 (DESKDNLESR) the composition is skewed to basic and acidic residues. IQ domains are found at residues 93-121 (LEQA…GIIR), 122-140 (LQAV…ATYS), and 144-170 (GIVK…QKKH). Residues 106 to 116 (AHQARRAFRTL) form a calmodulin-binding region. 3 disordered regions span residues 244–488 (EIPK…KEKD), 502–573 (DEKS…SGRK), and 637–664 (AKGS…DWKR). Positions 251–258 (KKRNYQAV) match the Nuclear localization signal 1 motif. Positions 305–315 (DPLRNESDKAN) are enriched in basic and acidic residues. Low complexity predominate over residues 339–353 (SPSLKRSSLSNGSKK). The Nuclear localization signal 2 motif lies at 351–358 (SKKATLRS). Composition is skewed to basic and acidic residues over residues 358-367 (SAEKKKKDIP), 427-447 (TEKE…KVLE), and 502-532 (DEKS…KCAD). Polar residues predominate over residues 536 to 547 (SSENGNVGSDNT). Residues 652–664 (DITHKSTRTDWKR) are compositionally biased toward basic and acidic residues.

The protein belongs to the IQD family. In terms of assembly, binds to multiple calmodulin (CaM) in the presence of Ca(2+) and CaM-like proteins.

Its subcellular location is the nucleus. It localises to the cytoplasm. The protein resides in the cytoskeleton. In terms of biological role, may be involved in cooperative interactions with calmodulins or calmodulin-like proteins. Recruits calmodulin proteins to microtubules, thus being a potential scaffold in cellular signaling and trafficking. May associate with nucleic acids and regulate gene expression at the transcriptional or post-transcriptional level. The protein is Protein IQ-DOMAIN 28 of Arabidopsis thaliana (Mouse-ear cress).